A 29-amino-acid polypeptide reads, in one-letter code: Probable small toxic protein BsrH (29 aa).

A helical membrane pass occupies residues 6 to 26; the sequence is FQALMLMLAFGSFIIALLTYI.

The protein localises to the cell membrane. Possible toxic component of a type I toxin-antitoxin (TA) system; an overlapping antisense RNA has been identified. The protein is Probable small toxic protein BsrH of Bacillus subtilis (strain 168).